The chain runs to 106 residues: Urease subunit beta (106 aa).

It belongs to the urease beta subunit family. In terms of assembly, heterotrimer of UreA (gamma), UreB (beta) and UreC (alpha) subunits. Three heterotrimers associate to form the active enzyme.

Its subcellular location is the cytoplasm. It carries out the reaction urea + 2 H2O + H(+) = hydrogencarbonate + 2 NH4(+). It participates in nitrogen metabolism; urea degradation; CO(2) and NH(3) from urea (urease route): step 1/1. The polypeptide is Urease subunit beta (Prochlorococcus marinus (strain MIT 9215)).